The following is a 346-amino-acid chain: MQKSILLTKPDGTQSNLHSIKTETPTTVEFDSEQMERGHRERGRSKKKRGERDSNVSSLSRSRSRASSRSRVREEEFLKWTVLRQDPSMRLRVVDVDSEEEGEGNDEDDDDGDGDDMDEEESDEEQVSDIENDLEIDEEFHYDLGMKVLPNFCTSINEVLDSSKPWIAKYEISIRGHENEDVSLEQLDGGYVRAMQLLTKGAGAEAGNQRSFILYTDLSSESTYALTYLMGAAVNQGDTVYIVHWEPSKPTDDSQMFANVARIRKHVMHLFDCVAGVLDDLDVVVLSLTHPYPKHLLNEMIHGLKPVALCCSLSVILSTLQNFVCSVPILAVRKKLKRAKRKGISE.

A compositionally biased stretch (polar residues) spans 1–29 (MQKSILLTKPDGTQSNLHSIKTETPTTVE). Disordered regions lie at residues 1-74 (MQKS…RVRE) and 91-132 (LRVV…DIEN). Phosphothreonine is present on Thr24. The span at 40–49 (RERGRSKKKR) shows a compositional bias: basic residues. Acidic residues predominate over residues 96-132 (VDSEEEGEGNDEDDDDGDGDDMDEEESDEEQVSDIEN).

In terms of biological role, controls the nucleo-mitochondrial dependence of galactose, maltose and raffinose utilization. Becomes essential in the absence of functioning mitochondria. This chain is Sugar utilization regulatory protein IMP2 (IMP2'), found in Saccharomyces cerevisiae (strain ATCC 204508 / S288c) (Baker's yeast).